A 264-amino-acid chain; its full sequence is Zinc import ATP-binding protein ZnuC (264 aa).

The 216-residue stretch at 20-235 folds into the ABC transporter domain; it reads VQLKNIEVTF…PNFIHFFGDQ (216 aa). ATP is bound at residue 52–59; sequence GPNGGGKS.

Belongs to the ABC transporter superfamily. Zinc importer (TC 3.A.1.15.5) family. The complex is composed of two ATP-binding proteins (ZnuC), two transmembrane proteins (ZnuB) and a solute-binding protein (ZnuA).

It is found in the cell inner membrane. It catalyses the reaction Zn(2+)(out) + ATP(in) + H2O(in) = Zn(2+)(in) + ADP(in) + phosphate(in) + H(+)(in). Part of the ABC transporter complex ZnuABC involved in zinc import. Responsible for energy coupling to the transport system. The chain is Zinc import ATP-binding protein ZnuC from Haemophilus ducreyi (strain 35000HP / ATCC 700724).